The sequence spans 245 residues: Phosducin (245 aa).

Residues 1-14 show a composition bias toward acidic residues; the sequence is MEEAKSQSLEEDFE. Positions 1-68 are disordered; that stretch reads MEEAKSQSLE…RDNKDSKERF (68 aa). A Phosducin domain is found at 1-241; it reads MEEAKSQSLE…THALDQTNME (241 aa). The segment covering 59–68 has biased composition (basic and acidic residues); that stretch reads RDNKDSKERF. Phosphoserine; by PKA is present on S73. Residues 111-245 are thioredoxin fold; sequence YGFVYELETG…DQTNMEEDIE (135 aa).

Belongs to the phosducin family. In terms of assembly, interacts with CRX. Forms a complex with the beta and gamma subunits of the GTP-binding protein, transducin. Post-translationally, light-induced changes in cyclic nucleotide levels modulate the phosphorylation of this protein by cAMP kinase.

Its subcellular location is the cytoplasm. The protein resides in the cytosol. It is found in the nucleus. The protein localises to the cell projection. It localises to the cilium. Its subcellular location is the photoreceptor outer segment. The protein resides in the photoreceptor inner segment. In terms of biological role, inhibits the transcriptional activation activity of the cone-rod homeobox CRX. May participate in the regulation of visual phototransduction or in the integration of photoreceptor metabolism. The chain is Phosducin (PDC) from Felis catus (Cat).